Consider the following 178-residue polypeptide: Adenine phosphoribosyltransferase (178 aa).

It belongs to the purine/pyrimidine phosphoribosyltransferase family. In terms of assembly, homodimer.

It localises to the cytoplasm. The catalysed reaction is AMP + diphosphate = 5-phospho-alpha-D-ribose 1-diphosphate + adenine. It participates in purine metabolism; AMP biosynthesis via salvage pathway; AMP from adenine: step 1/1. Its function is as follows. Catalyzes a salvage reaction resulting in the formation of AMP, that is energically less costly than de novo synthesis. In Bacteroides fragilis (strain ATCC 25285 / DSM 2151 / CCUG 4856 / JCM 11019 / LMG 10263 / NCTC 9343 / Onslow / VPI 2553 / EN-2), this protein is Adenine phosphoribosyltransferase.